The primary structure comprises 163 residues: Putative NOL1/NOP2/Sun domain family member 5B (163 aa).

The Nucleophile role is filled by Cys-93.

Belongs to the class I-like SAM-binding methyltransferase superfamily. RsmB/NOP family. As to expression, ubiquitous.

In Homo sapiens (Human), this protein is Putative NOL1/NOP2/Sun domain family member 5B (NSUN5P1).